The chain runs to 712 residues: Translation initiation factor eIF2B subunit epsilon (712 aa).

The tract at residues 1–20 is disordered; sequence MAGKKGQKKSGLGNHGKNSD. Phosphoserine occurs at positions 478, 481, 507, 525, 538, and 707. A W2 domain is found at 539-710; sequence EFEDEDFEKE…QNADEESSSE (172 aa).

It belongs to the eIF-2B gamma/epsilon subunits family. In terms of assembly, component of the translation initiation factor 2B (eIF2B) complex which is a heterodecamer of two sets of five different subunits: alpha, beta, gamma, delta and epsilon. Subunits alpha, beta and delta comprise a regulatory subcomplex and subunits epsilon and gamma comprise a catalytic subcomplex. Within the complex, the hexameric regulatory complex resides at the center, with the two heterodimeric catalytic subcomplexes bound on opposite sides.

Its subcellular location is the cytoplasm. The protein localises to the cytosol. Its function is as follows. Acts as a catalytic component of the translation initiation factor 2B (eIF2B) complex, which catalyzes the exchange of GDP for GTP on eukaryotic initiation factor 2 (eIF2) and is regulated by phosphorylated eIF2. Its guanine nucleotide exchange factor activity is repressed when bound to eIF2 complex phosphorylated on the alpha subunit, thereby limiting the amount of methionyl-initiator methionine tRNA available to the ribosome and consequently global translation is repressed. It activates the synthesis of GCN4 in yeast under amino acid starvation conditions by suppressing the inhibitory effects of multiple AUG codons present in the leader of GCN4 mRNA. It may promote either repression or activation of GCN4 expression depending on amino acid availability. GCD6 and GCD7 repress GCN4 expression at the translational level by ensuring that ribosomes which have translated UORF1 will reinitiate at UORF2, -3, or -4 and thus fail to reach the GCN4 start site. This Saccharomyces cerevisiae (strain ATCC 204508 / S288c) (Baker's yeast) protein is Translation initiation factor eIF2B subunit epsilon (GCD6).